We begin with the raw amino-acid sequence, 216 residues long: Protein Syd (216 aa).

This sequence belongs to the Syd family.

The protein resides in the cell inner membrane. Its function is as follows. Interacts with the SecY protein in vivo. May bind preferentially to an uncomplexed state of SecY, thus functioning either as a chelating agent for excess SecY in the cell or as a regulatory factor that negatively controls the translocase function. This chain is Protein Syd, found in Shewanella baltica (strain OS155 / ATCC BAA-1091).